The sequence spans 171 residues: 3-hydroxydecanoyl-[acyl-carrier-protein] dehydratase (171 aa).

The active site involves His70.

The protein belongs to the thioester dehydratase family. FabA subfamily. Homodimer.

It localises to the cytoplasm. It catalyses the reaction a (3R)-hydroxyacyl-[ACP] = a (2E)-enoyl-[ACP] + H2O. It carries out the reaction (3R)-hydroxydecanoyl-[ACP] = (2E)-decenoyl-[ACP] + H2O. The enzyme catalyses (2E)-decenoyl-[ACP] = (3Z)-decenoyl-[ACP]. It participates in lipid metabolism; fatty acid biosynthesis. Functionally, necessary for the introduction of cis unsaturation into fatty acids. Catalyzes the dehydration of (3R)-3-hydroxydecanoyl-ACP to E-(2)-decenoyl-ACP and then its isomerization to Z-(3)-decenoyl-ACP. Can catalyze the dehydratase reaction for beta-hydroxyacyl-ACPs with saturated chain lengths up to 16:0, being most active on intermediate chain length. This Pseudoalteromonas translucida (strain TAC 125) protein is 3-hydroxydecanoyl-[acyl-carrier-protein] dehydratase.